The following is a 181-amino-acid chain: Small ribosomal subunit protein uS4 (181 aa).

Residues 108–177 enclose the S4 RNA-binding domain; the sequence is RRLQTMVYRQ…EGHPEIERIN (70 aa). The interval 161–181 is disordered; that stretch reads GTSPLTSEGHPEIERINKKRR. The segment covering 169 to 181 has biased composition (basic and acidic residues); sequence GHPEIERINKKRR.

It belongs to the universal ribosomal protein uS4 family. In terms of assembly, part of the 30S ribosomal subunit. Contacts protein S5. The interaction surface between S4 and S5 is involved in control of translational fidelity.

Functionally, one of the primary rRNA binding proteins, it binds directly to 16S rRNA where it nucleates assembly of the body of the 30S subunit. Its function is as follows. With S5 and S12 plays an important role in translational accuracy. The polypeptide is Small ribosomal subunit protein uS4 (Methanosphaerula palustris (strain ATCC BAA-1556 / DSM 19958 / E1-9c)).